Here is a 412-residue protein sequence, read N- to C-terminus: Mannose-1-phosphate guanylyltransferase regulatory subunit alpha (412 aa).

The segment at 6–259 (TKAIILVGGP…VGFWRQIKNA (254 aa)) is substrate-binding domain. The GDP-alpha-D-mannose site is built by Glu-88 and Gln-255. Residues 281-412 (LKKGNNIIGN…DRNYNNEIIL (132 aa)) are hexapeptide repeat domain.

The protein belongs to the transferase hexapeptide repeat family. As to quaternary structure, component of the GMPPA-GMPPB mannose-1-phosphate guanylyltransferase complex composed of 4 gmppA subunits and 8 gmppB subunits; the complex is organized into three layers, a central layer made up of 2 gmppA dimers sandwiched between two layers each made up of 2 gmppB dimers.

Regulatory subunit of the GMPPA-GMPPB mannose-1-phosphate guanylyltransferase complex; reduces the catalytic activity of GMPPB when part of the complex. Mediates allosteric feedback inhibition of GMPPB catalytic activity upon binding GDP-alpha-D-mannose. Together with GMPPB regulates GDP-alpha-D-mannose levels. This chain is Mannose-1-phosphate guanylyltransferase regulatory subunit alpha (gmppA), found in Dictyostelium discoideum (Social amoeba).